Here is a 70-residue protein sequence, read N- to C-terminus: Putative defensin-like protein 280 (70 aa).

A signal peptide spans 1–23; that stretch reads MASIKHFFLVFICVSVLLTSGLA. 3 disulfide bridges follow: C30-C53, C39-C65, and C43-C67.

Belongs to the DEFL family.

It is found in the secreted. The polypeptide is Putative defensin-like protein 280 (Arabidopsis thaliana (Mouse-ear cress)).